We begin with the raw amino-acid sequence, 465 residues long: ATP synthase subunit beta 2 (465 aa).

Glycine 148–threonine 155 is an ATP binding site.

Belongs to the ATPase alpha/beta chains family. As to quaternary structure, F-type ATPases have 2 components, CF(1) - the catalytic core - and CF(0) - the membrane proton channel. CF(1) has five subunits: alpha(3), beta(3), gamma(1), delta(1), epsilon(1). CF(0) has three main subunits: a(1), b(2) and c(9-12). The alpha and beta chains form an alternating ring which encloses part of the gamma chain. CF(1) is attached to CF(0) by a central stalk formed by the gamma and epsilon chains, while a peripheral stalk is formed by the delta and b chains.

Its subcellular location is the cell inner membrane. The catalysed reaction is ATP + H2O + 4 H(+)(in) = ADP + phosphate + 5 H(+)(out). In terms of biological role, produces ATP from ADP in the presence of a proton gradient across the membrane. The catalytic sites are hosted primarily by the beta subunits. This Psychromonas ingrahamii (strain DSM 17664 / CCUG 51855 / 37) protein is ATP synthase subunit beta 2.